The chain runs to 197 residues: Carnitine operon protein CaiE (197 aa).

Residues 177-197 are disordered; it reads TAPEANRPRLRGTTEVKPKGQ. The segment covering 188 to 197 has biased composition (basic and acidic residues); that stretch reads GTTEVKPKGQ.

It belongs to the transferase hexapeptide repeat family.

It functions in the pathway amine and polyamine metabolism; carnitine metabolism. Functionally, overproduction of CaiE stimulates the activity of CaiB and CaiD. This Proteus sp. (strain LE138) protein is Carnitine operon protein CaiE.